The primary structure comprises 661 residues: Potassium voltage-gated channel subfamily KQT member 1 (661 aa).

2 disordered regions span residues 1–29 (MAAA…ESAG) and 42–88 (ESGP…SLDP). Over 1 to 119 (MAAASTPPRA…YNFLERPTGW (119 aa)) the chain is Cytoplasmic. The residue at position 27 (serine 27) is a Phosphoserine; by PKA. Over residues 54–85 (VSPPSAPEPAPPASPASPAPPAADQGPQPPVS) the composition is skewed to pro residues. A helical transmembrane segment spans residues 120–141 (KCFAYHFTVFLIVLVCLIFSVL). Residues 142-152 (STIEQYATLAT) lie on the Extracellular side of the membrane. The helical transmembrane segment at 153 to 175 (GTLFWMEIVLVVFFGTEYVVRLW) threads the bilayer. At 176–191 (SAGCRSKYVGLWGRLR) the chain is on the cytoplasmic side. Residues 192–217 (FARKPISIIDLIVVVASMVVLCVGSK) traverse the membrane as a helical segment. At 218–225 (GQVFATSA) the chain is on the extracellular side. A helical; Voltage-sensor membrane pass occupies residues 226–241 (IRGIRFLQILRMLHVD). An interaction with KCNE3 region spans residues 237 to 245 (MLHVDRQGG). Topologically, residues 242–259 (RQGGTWRLLGSVVFIHRQ) are cytoplasmic. Glutamine 243 is an a 1,2-diacyl-sn-glycero-3-phospho-(1D-myo-inositol-4,5-bisphosphate) binding site. A helical membrane pass occupies residues 260–282 (ELITTLYIGFLGLIFSSYFVYLA). The Extracellular portion of the chain corresponds to 283–298 (EKDAVNESGRVEFGSY). A glycan (N-linked (GlcNAc...) asparagine) is linked at asparagine 288. The pore-forming intramembrane region spans 299-319 (ADALWWGVVTVTTIGYGDKVP). At 320-321 (QT) the chain is on the extracellular side. A helical membrane pass occupies residues 322–347 (WVGKTIASCFSVFAISFFALPAGILG). Topologically, residues 348 to 661 (SGFALKVQQK…VPRRDPEEGS (314 aa)) are cytoplasmic. An interaction with CALM region spans residues 369–381 (AAASLIQTAWRCY). 2 positions are modified to phosphoserine: serine 406 and serine 408. Residues 514 to 528 (KVIRRMQYFVAKKKF) form an interaction with CALM; calcium-dependent region. Residues 534 to 571 (PYDVRDVIEQYSQGHLNLMVRIKELQRRLDQSIGKPSL) are interaction with KCNE1 C-terminus. The stretch at 584–620 (SNSIGARLNRVEDKVTQLDQRLVLIADMLQQLLALHQ) forms a coiled coil. The tract at residues 587–615 (IGARLNRVEDKVTQLDQRLVLIADMLQQL) is interaction with AKAP9. The C-terminal assembly domain (tetramerization) stretch occupies residues 588–619 (GARLNRVEDKVTQLDQRLVLIADMLQQLLALH). A disordered region spans residues 624 to 661 (HGGAHPAQARDGDPADPELFLPTYEQLTVPRRDPEEGS).

Belongs to the potassium channel family. KQT (TC 1.A.1.15) subfamily. Kv7.1/KCNQ1 sub-subfamily. In terms of assembly, tetramer. Heterotetramer with KCNE1; targets to the membrane raft. Interacts (via C-terminus) with CALM; forms a heterooctameric structure (with 4:4 KCNQ1:CALM stoichiometry) in a calcium-independent manner. Interacts with AKAP9; targets protein kinase A (PKA) catalytic and regulatory subunits and protein phosphatase 1 (PP1) to the KCNQ1-KCNE1 complex, allowing PKA-mediated phosphorylation and increase of delayed rectifier potassium channel activity. Interacts with KCNE2; form a heterooligomer complex that targets to the membrane raft and leading to currents with an apparently instantaneous activation, a rapid deactivation process and a linear current-voltage relationship and decreases the amplitude of the outward current. Interacts with AP2M1; mediates estrogen-induced internalization via clathrin-coated vesicles. Interacts with NEDD4L; promotes internalization and decreases I(Ks) currents. Interacts with USP2; counteracts the NEDD4L-specific down-regulation of I(Ks) and restore plasma membrane localization. Heterotetramer with KCNQ5; has a voltage-gated potassium channel activity. Interacts with KCNE3; four KCNE3 molecules are bound to one KCNQ1 tetramer (4:4 KCNQ1:KCNE3 stoichiometry); alters membrane raft localization; affects KCNQ1 structure and gating properties. Interacts with KCNE4; impairs KCNQ1 localization in lipid rafts and inhibits voltage-gated potassium channel activity. Interacts with KCNE5; impairs KCNQ1 localization in lipid rafts and only conducts current upon strong and continued depolarization. Interacts with SLC5A3; forms coregulatory channel-transporter complexes that modulate Na(+)-coupled myo-inositol influx through the transporter. Post-translationally, phosphorylation at Ser-27 by PKA; increases delayed rectifier potassium channel activity of the KCNQ1-KCNE1 complex through a macromolecular complex that includes PKA, PP1, and the targeting protein AKAP9. Ubiquitinated by NEDD4L; promotes internalization. The ubiquitinylated form is internalized through a clathrin-mediated endocytosis by interacting with AP2M1 and is recycled back to the cell membrane via RAB4A and RAB11A. In terms of processing, deubiquitinated by USP2; counteracts the NEDD4L-specific down-regulation of I(Ks) and restores the membrane localization.

Its subcellular location is the cell membrane. The protein localises to the cytoplasmic vesicle membrane. The protein resides in the early endosome. It localises to the membrane raft. It is found in the endoplasmic reticulum. Its subcellular location is the basolateral cell membrane. The protein localises to the apical cell membrane. The enzyme catalyses K(+)(in) = K(+)(out). Its activity is regulated as follows. PIP2 molecule is essential to activate KCNQ channels by inducing the coupling of the voltage-sensing domain (VSD) and the pore-forming domain (PD). Upon channel activation, PIP2 disrupts the VSD-calmodulin/CALM interactions, causing the release of CALM from the VSD which triggers the opening of the gate. Calcium potentiates KCNQ1 channel current through calcium-bound CALM. Calcium-bound CALM competes with PIP2 to stabilize the channel open state. In terms of biological role, pore-forming subunit of the voltage-gated potassium (Kv) channel involved in the regulation of cardiomyocyte excitability and important in normal development and functions of myocardium, inner ear, stomach and colon. Associates with KCNE beta subunits that modulates current kinetics. Induces a voltage-dependent by rapidly activating and slowly deactivating potassium-selective outward current. Also promotes a delayed voltage activated potassium current showing outward rectification characteristic. During beta-adrenergic receptor stimulation participates in cardiac repolarization by associating with KCNE1 to form the I(Ks) cardiac potassium current that increases the amplitude and slows down the activation kinetics of outward potassium current I(Ks). Muscarinic agonist oxotremorine-M strongly suppresses KCNQ1/KCNE1 current. When associated with KCNE3, forms the potassium channel that is important for cyclic AMP-stimulated intestinal secretion of chloride ions. This interaction with KCNE3 is reduced by 17beta-estradiol, resulting in the reduction of currents. During conditions of increased substrate load, maintains the driving force for proximal tubular and intestinal sodium ions absorption, gastric acid secretion, and cAMP-induced jejunal chloride ions secretion. Allows the provision of potassium ions to the luminal membrane of the secretory canaliculus in the resting state as well as during stimulated acid secretion. When associated with KCNE2, forms a heterooligomer complex leading to currents with an apparently instantaneous activation, a rapid deactivation process and a linear current-voltage relationship and decreases the amplitude of the outward current. When associated with KCNE4, inhibits voltage-gated potassium channel activity. When associated with KCNE5, this complex only conducts current upon strong and continued depolarization. Also forms a heterotetramer with KCNQ5 that has a voltage-gated potassium channel activity. Binds with phosphatidylinositol 4,5-bisphosphate. KCNQ1-KCNE2 channel associates with Na(+)-coupled myo-inositol symporter in the apical membrane of choroid plexus epithelium and regulates the myo-inositol gradient between blood and cerebrospinal fluid with an impact on neuron excitability. The sequence is that of Potassium voltage-gated channel subfamily KQT member 1 from Oryctolagus cuniculus (Rabbit).